The primary structure comprises 200 residues: SKP1-like protein 19 (200 aa).

The span at 67-92 (DDVVETHESSTKGDKTVEEAKKKPDD) shows a compositional bias: basic and acidic residues. The tract at residues 67–109 (DDVVETHESSTKGDKTVEEAKKKPDDVAVPESTEGDDEAEDKK) is disordered. Residues 132-190 (ILAANYLNVQGLFDLCSKTIADYIKDMTPEEVRELFNIENDFTPEEEEAIRNENAWTFE) are interaction with the F-box domain of F-box proteins.

This sequence belongs to the SKP1 family. In terms of assembly, part of a SCF (SKP1-cullin-F-box) protein ligase complex. Interacts with CPR1/CPR30. Expressed in leaves and flowers.

It is found in the nucleus. It functions in the pathway protein modification; protein ubiquitination. Involved in ubiquitination and subsequent proteasomal degradation of target proteins. Together with CUL1, RBX1 and a F-box protein, it forms a SCF E3 ubiquitin ligase complex. The functional specificity of this complex depends on the type of F-box protein. In the SCF complex, it serves as an adapter that links the F-box protein to CUL1. The chain is SKP1-like protein 19 (ASK19) from Arabidopsis thaliana (Mouse-ear cress).